The chain runs to 273 residues: uncharacterized protein (273 aa).

The protein belongs to the ycf23 family.

The protein localises to the plastid. It localises to the chloroplast. This is an uncharacterized protein from Pyropia yezoensis (Susabi-nori).